The following is a 317-amino-acid chain: Melanocyte-stimulating hormone receptor (317 aa).

Residues 1–37 (MPMQGAQKRLLGSLNSTPTATPNLGLAANHTGAPCLE) are Extracellular-facing. A glycan (N-linked (GlcNAc...) asparagine) is linked at asparagine 29. The helical transmembrane segment at 38–63 (VSIPDGLFLSLGLVSLVENVLVVAAI) threads the bilayer. The Cytoplasmic segment spans residues 64 to 72 (AKNRNLHSP). A helical transmembrane segment spans residues 73-93 (MYCFICCLALSDLLVSSSNML). At 94–118 (ETAVILLLEAGALATRASVVQQLQN) the chain is on the extracellular side. Residues 119–140 (TIDVLTCSSMLCSLCFLGAIAV) traverse the membrane as a helical segment. Residues 141–163 (DRHVSIFYALRYHSIMTLARARR) are Cytoplasmic-facing. The chain crosses the membrane as a helical span at residues 164-183 (AIAAIWVASVLSSTLFIAYC). Residues 184–191 (DHAXVLLC) lie on the Extracellular side of the membrane. A helical membrane pass occupies residues 192–211 (LVVFFLAMLVLMAVLYVHML). Residues 212-240 (ARACQHAQGITRLHQRQPPAHQGFGFRGA) are Cytoplasmic-facing. The helical transmembrane segment at 241 to 266 (ATLTILLGIFFLCWGPFFLHLTLVVL) threads the bilayer. Topologically, residues 267-279 (CPQHLTCSCIFKN) are extracellular. Residues 280–300 (FKVFLTLIICSTIIDPLIYAF) form a helical membrane-spanning segment. Topologically, residues 301-317 (RSQELRRTLKELLLCSW) are cytoplasmic. Cysteine 315 carries the S-palmitoyl cysteine lipid modification.

Belongs to the G-protein coupled receptor 1 family. In terms of assembly, interacts with MGRN1, but does not undergo MGRN1-mediated ubiquitination; this interaction competes with GNAS-binding and thus inhibits agonist-induced cAMP production. Interacts with OPN3; the interaction results in a decrease in MC1R-mediated cAMP signaling and ultimately a decrease in melanin production in melanocytes.

It localises to the cell membrane. Functionally, receptor for MSH (alpha, beta and gamma) and ACTH. The activity of this receptor is mediated by G proteins which activate adenylate cyclase. Mediates melanogenesis, the production of eumelanin (black/brown) and phaeomelanin (red/yellow), via regulation of cAMP signaling in melanocytes. The polypeptide is Melanocyte-stimulating hormone receptor (MC1R) (Ateles paniscus (Black spider monkey)).